A 1534-amino-acid polypeptide reads, in one-letter code: Dicer-like protein 1 (1534 aa).

A disordered region spans residues 36–70; the sequence is PSAEPGVEHDQISPGESDEEIEENISDQNNSSSQK. Residues 51–60 show a composition bias toward acidic residues; that stretch reads ESDEEIEENI. Residues 130–311 enclose the Helicase ATP-binding domain; the sequence is LFERAKAQNT…AAATRLETLL (182 aa). An ATP-binding site is contributed by 143–150; the sequence is LDTGSGKT. The short motif at 256 to 259 is the DEAH box element; that stretch reads DEAH. The 158-residue stretch at 456 to 613 folds into the Helicase C-terminal domain; sequence ELSKHFSHAP…FCETLPEDRI (158 aa). The Dicer dsRNA-binding fold domain maps to 648-738; sequence AIAILARYAS…KSIYHKRLPA (91 aa). A PAZ domain is found at 888-1016; sequence KTVTFVQEND…ICAEPLKISA (129 aa). 2 consecutive RNase III domains span residues 1054–1199 and 1250–1402; these read SDYA…LSGG and ALQV…VDSD. The Mg(2+) site is built by Glu-1291, Asp-1388, and Glu-1391. A DRBM domain is found at 1436–1504; it reads TFLHNRLANE…SERALVVLDG (69 aa). Zn(2+) is bound by residues Cys-1448, His-1475, Cys-1516, and Cys-1518.

The protein belongs to the helicase family. Dicer subfamily. The cofactor is Mg(2+). Mn(2+) serves as cofactor.

In terms of biological role, dicer-like endonuclease involved in cleaving double-stranded RNA in the RNA interference (RNAi) pathway. Produces 21 to 25 bp dsRNAs (siRNAs) which target the selective destruction of homologous RNAs leading to sequence-specific suppression of gene expression, called post-transcriptional gene silencing (PTGS). Part of a broad host defense response against viral infection and transposons. The protein is Dicer-like protein 1 (dcl1) of Aspergillus clavatus (strain ATCC 1007 / CBS 513.65 / DSM 816 / NCTC 3887 / NRRL 1 / QM 1276 / 107).